The following is a 364-amino-acid chain: Very-long-chain (3R)-3-hydroxyacyl-CoA dehydratase 3 (364 aa).

Topologically, residues 1–151 (MAMENQVLTP…ETLTNLRKGY (151 aa)) are cytoplasmic. The 90-residue stretch at 7–96 (VLTPHVYWAQ…KVSQWWERLT (90 aa)) folds into the CS domain. Thr-9 carries the post-translational modification Phosphothreonine. Positions 113 to 138 (LDESDAEMELRAKEEERLNKLRLESE) form a coiled coil. Ser-116 and Ser-137 each carry phosphoserine. Residues 152-172 (LFMYNLVQFLGFSWIFVNLTV) form a helical membrane-spanning segment. At 173 to 191 (RFCILGKESFYDTFHTVAD) the chain is on the lumenal side. Residues 192-212 (MMYFCQMLAVVETINAAIGVT) traverse the membrane as a helical segment. At 213–214 (TS) the chain is on the cytoplasmic side. The helical transmembrane segment at 215 to 235 (PVLPSLIQLLGRNFILFIIFG) threads the bilayer. Residues 236-244 (TMEEMQNKA) lie on the Lumenal side of the membrane. The helical transmembrane segment at 245-265 (VVFFVFYLWSAIEIFRYSFYM) threads the bilayer. At 266–282 (LTCIDMDWEVLTWLRYT) the chain is on the cytoplasmic side. A helical transmembrane segment spans residues 283–303 (LWIPLYPLGCLAEAVSVVQSI). Active-site residues include Tyr-288 and Glu-295. At 304–324 (PIFNETGRFSFTLPYPVKIKV) the chain is on the lumenal side. Residues 325–345 (RFSFFLQIYLIMIFLGLYINF) form a helical membrane-spanning segment. Over 346–364 (RHLYKQRRRRYGQKKKKIH) the chain is Cytoplasmic.

This sequence belongs to the very long-chain fatty acids dehydratase HACD family. As to quaternary structure, may interact with enzymes of the ELO family (including ELOVL1); with those enzymes that mediate condensation, the first of the four steps of the reaction cycle responsible for fatty acids elongation, may be part of a larger fatty acids elongase complex. Interacts with RAC1.

Its subcellular location is the endoplasmic reticulum membrane. It carries out the reaction a very-long-chain (3R)-3-hydroxyacyl-CoA = a very-long-chain (2E)-enoyl-CoA + H2O. The catalysed reaction is (3R)-hydroxyhexadecanoyl-CoA = (2E)-hexadecenoyl-CoA + H2O. Its pathway is lipid metabolism; fatty acid biosynthesis. In terms of biological role, catalyzes the third of the four reactions of the long-chain fatty acids elongation cycle. This endoplasmic reticulum-bound enzymatic process, allows the addition of two carbons to the chain of long- and very long-chain fatty acids/VLCFAs per cycle. This enzyme catalyzes the dehydration of the 3-hydroxyacyl-CoA intermediate into trans-2,3-enoyl-CoA, within each cycle of fatty acid elongation. Thereby, it participates in the production of VLCFAs of different chain lengths that are involved in multiple biological processes as precursors of membrane lipids and lipid mediators. Involved in Rac1-signaling pathways leading to the modulation of gene expression. This is Very-long-chain (3R)-3-hydroxyacyl-CoA dehydratase 3 from Pongo abelii (Sumatran orangutan).